The following is a 526-amino-acid chain: uncharacterized protein (526 aa).

2 WD repeats span residues 210–248 (SMEQYINSIAISPNKKYIALATTCGLIIYNLIDKTHHDT) and 452–491 (SHNSCVTSIAISSNNKMILTAGLDGLLKLWNSKTLNLIDS).

This is an uncharacterized protein from Acanthamoeba polyphaga mimivirus (APMV).